The chain runs to 481 residues: Wax ester synthase/diacylglycerol acyltransferase 1 (481 aa).

At 1-185 (MKAEKVMERE…TTATKKPADS (185 aa)) the chain is on the cytoplasmic side. Residue histidine 147 is the Proton acceptor of the active site. The chain crosses the membrane as a helical span at residues 186-206 (MAWWLFVGFWFMIRVTFTTIV). Over 207–481 (EFSKLMLTVC…QGEIFHKTEV (275 aa)) the chain is Lumenal.

This sequence in the N-terminal section; belongs to the long-chain O-acyltransferase family. Expressed in flowers, siliques, top parts of stems, and leaves. Not found in roots, seeds and young seedlings.

Its subcellular location is the cell membrane. It localises to the endoplasmic reticulum membrane. It carries out the reaction a long chain fatty alcohol + a fatty acyl-CoA = a wax ester + CoA. The enzyme catalyses an acyl-CoA + a 1,2-diacyl-sn-glycerol = a triacyl-sn-glycerol + CoA. It functions in the pathway glycerolipid metabolism; triacylglycerol biosynthesis. The protein operates within lipid metabolism. Functionally, bifunctional wax ester synthase/diacylglycerol acyltransferase. Involved in cuticular wax biosynthesis. Required to reduce leaf water loss, especially during drought. This chain is Wax ester synthase/diacylglycerol acyltransferase 1, found in Arabidopsis thaliana (Mouse-ear cress).